Reading from the N-terminus, the 249-residue chain is MSHHIVEVRDLCHCYPDGTEALRGITFRIHHGESVAVVGANGAGKSTLLLHLNGYLAPTRGDVRIGDTPVVRTTLPEVRRTVGMVFQDPDDQLFMPTVFDDVAFGPLNLGLPPAEVERRVADALEQVGVAHLHNKPPYRLSGGEKRRVAIATVLSMSPDILVLDEPTTGLDPYARRQIMGLLRDFKHTKIITSHDLDMVMELCERTIVLREGRVAADGPTRDIFGNDELLATCRLERPLSMQGCPVCGR.

The region spanning 6–236 is the ABC transporter domain; the sequence is VEVRDLCHCY…DELLATCRLE (231 aa). Position 39–46 (39–46) interacts with ATP; that stretch reads GANGAGKS.

This sequence belongs to the ABC transporter superfamily.

The protein localises to the cell inner membrane. In terms of biological role, probably part of an ABC transporter complex. Responsible for energy coupling to the transport system. In Geobacter sulfurreducens (strain ATCC 51573 / DSM 12127 / PCA), this protein is Putative ABC transporter ATP-binding protein GSU1281.